The sequence spans 116 residues: Cysteine-rich venom protein Cau1 (116 aa).

Positions 4-42 (SYAVVGHYTQIVWYKSDRIGCAAAYCPSSVYNYFYVCQY) constitute an SCP domain. Cystine bridges form between Cys-24/Cys-40, Cys-62/Cys-69, Cys-65/Cys-74, Cys-87/Cys-105, and Cys-96/Cys-109. The region spanning 78–111 (CRVEDEFINCKDMAESRDCQDNYMMTNCAAFCSC) is the ShKT domain.

Belongs to the CRISP family. As to expression, expressed by the venom gland.

The protein localises to the secreted. In terms of biological role, blocks contraction of smooth muscle elicited by high potassium-induced depolarization, but does not block caffeine-stimulated contraction. May target voltage-gated calcium channels on smooth muscle. This Causus rhombeatus (Rhombic night adder) protein is Cysteine-rich venom protein Cau1.